The sequence spans 440 residues: Tyrosine--tRNA ligase (440 aa).

Tyrosine 46 is an L-tyrosine binding site. The 'HIGH' region motif lies at 51-60 (PTAPSLHIGN). 2 residues coordinate L-tyrosine: tyrosine 181 and glutamine 185. The short motif at 241–245 (KFGKS) is the 'KMSKS' region element. Lysine 244 contributes to the ATP binding site. Residues 373–430 (DRIAQAGVSAGLFKSISEARKTIKSGGVYVNNVRVEDEEQLLGDGDFLKGRFVVLRRG) form the S4 RNA-binding domain.

It belongs to the class-I aminoacyl-tRNA synthetase family. TyrS type 1 subfamily. As to quaternary structure, homodimer.

Its subcellular location is the cytoplasm. The catalysed reaction is tRNA(Tyr) + L-tyrosine + ATP = L-tyrosyl-tRNA(Tyr) + AMP + diphosphate + H(+). Catalyzes the attachment of tyrosine to tRNA(Tyr) in a two-step reaction: tyrosine is first activated by ATP to form Tyr-AMP and then transferred to the acceptor end of tRNA(Tyr). The chain is Tyrosine--tRNA ligase from Bifidobacterium animalis subsp. lactis (strain AD011).